We begin with the raw amino-acid sequence, 80 residues long: Acyl carrier protein (80 aa).

The Carrier domain maps to 4-79 (DEVKGQVYDI…DAINYIVEKK (76 aa)). O-(pantetheine 4'-phosphoryl)serine is present on S39.

Belongs to the acyl carrier protein (ACP) family. In terms of processing, 4'-phosphopantetheine is transferred from CoA to a specific serine of apo-ACP by AcpS. This modification is essential for activity because fatty acids are bound in thioester linkage to the sulfhydryl of the prosthetic group.

The protein localises to the cytoplasm. It participates in lipid metabolism; fatty acid biosynthesis. Carrier of the growing fatty acid chain in fatty acid biosynthesis. The chain is Acyl carrier protein from Chloroherpeton thalassium (strain ATCC 35110 / GB-78).